We begin with the raw amino-acid sequence, 384 residues long: G protein-coupled receptor 88 (384 aa).

Residues 1–35 lie on the Extracellular side of the membrane; the sequence is MTNSSSTSTSTTTGGSLLLLCEEEESWAGRRIPVS. A glycan (N-linked (GlcNAc...) asparagine) is linked at Asn-3. A helical transmembrane segment spans residues 36-56; the sequence is LLYSGLAIGGTLANGMVIYLV. The Cytoplasmic portion of the chain corresponds to 57 to 73; sequence SSFRKLQTTSNAFIVNG. The helical transmembrane segment at 74–94 threads the bilayer; it reads CAADLSVCALWMPQEAVLGLL. Residues 95-116 are Extracellular-facing; the sequence is PSGSAEPPGDWDGGGGSYRLLR. A helical transmembrane segment spans residues 117–136; that stretch reads GGLLGLGLTVSLLSHCLVAL. The Cytoplasmic segment spans residues 137 to 158; that stretch reads NRYLLITRAPATYQVLYQRRHT. Residues 159–179 form a helical membrane-spanning segment; sequence VGMLALSWALALGLVLLLPPW. Topologically, residues 180-195 are extracellular; it reads APKPGAEPPQVHYPAL. Residues 196–216 traverse the membrane as a helical segment; it reads LAAGALLAQTALLLHCYLGIV. Residues 217–285 are Cytoplasmic-facing; the sequence is RRVRVSVKRV…RAQRRLSGLS (69 aa). The chain crosses the membrane as a helical span at residues 286–306; that stretch reads VLLLCCVFLLATQPLVWVSLA. The Extracellular segment spans residues 307–310; it reads SGFS. The helical transmembrane segment at 311–331 threads the bilayer; the sequence is LPVPWGVQAASWLLCCALSAL. The Cytoplasmic portion of the chain corresponds to 332 to 384; it reads NPLLYTWRNEEFRRSVRSVLPGVGDAAAAAAAATAVPAMSQAQLGTRAAGQHW.

It belongs to the G-protein coupled receptor 1 family. As to expression, expressed predominantly in the striatum.

The protein resides in the cell membrane. The protein localises to the cell projection. Its subcellular location is the cilium membrane. It is found in the cytoplasm. It localises to the nucleus. Orphan G protein-coupled receptor implicated in a large repertoire of behavioral responses that engage motor activities, spatial learning, and emotional processing. May play a role in the regulation of cognitive and motor function. Couples with the heterotrimeric G protein complex of the G(i) subfamily, consisting of GNAI1, GNB1 and GNG2, thereby acting through a G(i)-mediated pathway. Plays a role in the attenuation of D1 dopamine receptor (D1R)-mediated cAMP response in ciliated cells. In on-ciliated cells, involved in the inhibition of the beta-2 adrenergic receptor (B2AR) response. This is G protein-coupled receptor 88 (Gpr88) from Mus musculus (Mouse).